Here is a 583-residue protein sequence, read N- to C-terminus: 2-succinyl-5-enolpyruvyl-6-hydroxy-3-cyclohexene-1-carboxylate synthase (583 aa).

This sequence belongs to the TPP enzyme family. MenD subfamily. As to quaternary structure, homodimer. Mg(2+) is required as a cofactor. The cofactor is Mn(2+). It depends on thiamine diphosphate as a cofactor.

The enzyme catalyses isochorismate + 2-oxoglutarate + H(+) = 5-enolpyruvoyl-6-hydroxy-2-succinyl-cyclohex-3-ene-1-carboxylate + CO2. Its pathway is quinol/quinone metabolism; 1,4-dihydroxy-2-naphthoate biosynthesis; 1,4-dihydroxy-2-naphthoate from chorismate: step 2/7. It participates in quinol/quinone metabolism; menaquinone biosynthesis. In terms of biological role, catalyzes the thiamine diphosphate-dependent decarboxylation of 2-oxoglutarate and the subsequent addition of the resulting succinic semialdehyde-thiamine pyrophosphate anion to isochorismate to yield 2-succinyl-5-enolpyruvyl-6-hydroxy-3-cyclohexene-1-carboxylate (SEPHCHC). This chain is 2-succinyl-5-enolpyruvyl-6-hydroxy-3-cyclohexene-1-carboxylate synthase, found in Chlorobaculum parvum (strain DSM 263 / NCIMB 8327) (Chlorobium vibrioforme subsp. thiosulfatophilum).